The primary structure comprises 338 residues: Glyceraldehyde-3-phosphate dehydrogenase (338 aa).

NAD(+) is bound by residues 12 to 13, Asp34, and Arg79; that span reads RI. D-glyceraldehyde 3-phosphate contacts are provided by residues 150–152, Thr181, 210–211, and Arg233; these read SCT and TG. The Nucleophile role is filled by Cys151. NAD(+) is bound at residue Asn316.

Belongs to the glyceraldehyde-3-phosphate dehydrogenase family. As to quaternary structure, homotetramer.

The protein resides in the cytoplasm. It catalyses the reaction D-glyceraldehyde 3-phosphate + phosphate + NAD(+) = (2R)-3-phospho-glyceroyl phosphate + NADH + H(+). It functions in the pathway carbohydrate degradation; glycolysis; pyruvate from D-glyceraldehyde 3-phosphate: step 1/5. The protein is Glyceraldehyde-3-phosphate dehydrogenase (GPD) of Yarrowia lipolytica (strain CLIB 122 / E 150) (Yeast).